Reading from the N-terminus, the 65-residue chain is Large ribosomal subunit protein uL29 (65 aa).

Belongs to the universal ribosomal protein uL29 family.

The polypeptide is Large ribosomal subunit protein uL29 (Mycoplasmopsis synoviae (strain 53) (Mycoplasma synoviae)).